Here is a 93-residue protein sequence, read N- to C-terminus: MAHKKAGGSSRNGRDSEGRRLGVKKFGNEAVIAGNIIVRQRGTRWHPGTNVGIGRDHTLFALTDGRVQFATKQGRAYVTVVPAQDAPAREAAE.

The segment at 1-22 is disordered; the sequence is MAHKKAGGSSRNGRDSEGRRLG.

It belongs to the bacterial ribosomal protein bL27 family.

In Methylobacterium sp. (strain 4-46), this protein is Large ribosomal subunit protein bL27.